A 92-amino-acid polypeptide reads, in one-letter code: Large ribosomal subunit protein uL23c (92 aa).

This sequence belongs to the universal ribosomal protein uL23 family. As to quaternary structure, part of the 50S ribosomal subunit.

It localises to the plastid. Its subcellular location is the chloroplast. Its function is as follows. Binds to 23S rRNA. This is Large ribosomal subunit protein uL23c (rpl23) from Nephroselmis olivacea (Green alga).